The following is a 176-amino-acid chain: Large ribosomal subunit protein uL6 (176 aa).

Over residues 151 to 170 the composition is skewed to basic and acidic residues; it reads RPPEPYKGKGVRYADEQVRR. The segment at 151–176 is disordered; sequence RPPEPYKGKGVRYADEQVRRKEAKKK.

Belongs to the universal ribosomal protein uL6 family. In terms of assembly, part of the 50S ribosomal subunit.

Its function is as follows. This protein binds to the 23S rRNA, and is important in its secondary structure. It is located near the subunit interface in the base of the L7/L12 stalk, and near the tRNA binding site of the peptidyltransferase center. This Shewanella piezotolerans (strain WP3 / JCM 13877) protein is Large ribosomal subunit protein uL6.